A 403-amino-acid chain; its full sequence is Phosphoglycerate kinase (403 aa).

Substrate is bound by residues 21-23 (DFN), Arg36, 59-62 (HLGR), Arg119, and Arg154. ATP contacts are provided by residues Lys207, Gly299, Glu330, and 357-360 (GGDA).

The protein belongs to the phosphoglycerate kinase family. In terms of assembly, monomer.

Its subcellular location is the cytoplasm. The catalysed reaction is (2R)-3-phosphoglycerate + ATP = (2R)-3-phospho-glyceroyl phosphate + ADP. Its pathway is carbohydrate degradation; glycolysis; pyruvate from D-glyceraldehyde 3-phosphate: step 2/5. This is Phosphoglycerate kinase from Chlamydia abortus (strain DSM 27085 / S26/3) (Chlamydophila abortus).